A 221-amino-acid chain; its full sequence is Uracil-DNA glycosylase 1 (221 aa).

Catalysis depends on aspartate 61, which acts as the Proton acceptor.

This sequence belongs to the uracil-DNA glycosylase (UDG) superfamily. UNG family.

It is found in the cytoplasm. The catalysed reaction is Hydrolyzes single-stranded DNA or mismatched double-stranded DNA and polynucleotides, releasing free uracil.. Functionally, excises uracil residues from the DNA which can arise as a result of misincorporation of dUMP residues by DNA polymerase or due to deamination of cytosine. The sequence is that of Uracil-DNA glycosylase 1 from Listeria innocua serovar 6a (strain ATCC BAA-680 / CLIP 11262).